The following is a 983-amino-acid chain: UPF0182 protein CMM_1204 (983 aa).

Transmembrane regions (helical) follow at residues 16–36 (LAITAAIIAALVIAFFIFAGF), 56–76 (WGAGIALFLVGFLAMAIPVFV), 108–128 (LAMFAIPAVFGLFAGVSASSG), 161–181 (FYHAVVGFASAVVIISMLGVL), 205–225 (IQIAITAGVYFLLQGVSIWLD), 255–275 (AILAGIAGVVALFFIVTAVIG), and 281–301 (IIGTAGLIVASILVGTAYPAI). Over residues 699 to 714 (QDLWTTPNDPTATTEA) the composition is skewed to polar residues. 2 disordered regions span residues 699-718 (QDLWTTPNDPTATTEAGTPA) and 884-936 (DSGA…AQDV). Residues 902-918 (GGTGDGATDGATDGGTG) show a composition bias toward gly residues. Positions 919–933 (STPTPAPTTSPSAPA) are enriched in low complexity.

It belongs to the UPF0182 family.

The protein resides in the cell membrane. This is UPF0182 protein CMM_1204 from Clavibacter michiganensis subsp. michiganensis (strain NCPPB 382).